The following is a 66-amino-acid chain: Large ribosomal subunit protein bL31 (66 aa).

Positions 16, 18, 36, and 39 each coordinate Zn(2+).

This sequence belongs to the bacterial ribosomal protein bL31 family. Type A subfamily. Part of the 50S ribosomal subunit. Zn(2+) is required as a cofactor.

Binds the 23S rRNA. The polypeptide is Large ribosomal subunit protein bL31 (Geobacillus thermodenitrificans (strain NG80-2)).